A 155-amino-acid polypeptide reads, in one-letter code: Ribosomal RNA large subunit methyltransferase H (155 aa).

S-adenosyl-L-methionine is bound by residues Leu-72, Gly-103, and 122–127; that span reads FGRMVW.

Belongs to the RNA methyltransferase RlmH family. As to quaternary structure, homodimer.

Its subcellular location is the cytoplasm. It carries out the reaction pseudouridine(1915) in 23S rRNA + S-adenosyl-L-methionine = N(3)-methylpseudouridine(1915) in 23S rRNA + S-adenosyl-L-homocysteine + H(+). In terms of biological role, specifically methylates the pseudouridine at position 1915 (m3Psi1915) in 23S rRNA. The sequence is that of Ribosomal RNA large subunit methyltransferase H from Cereibacter sphaeroides (strain ATCC 17023 / DSM 158 / JCM 6121 / CCUG 31486 / LMG 2827 / NBRC 12203 / NCIMB 8253 / ATH 2.4.1.) (Rhodobacter sphaeroides).